The following is a 256-amino-acid chain: 2,3,4,5-tetrahydropyridine-2,6-dicarboxylate N-acetyltransferase (256 aa).

It belongs to the transferase hexapeptide repeat family. DapH subfamily.

It carries out the reaction (S)-2,3,4,5-tetrahydrodipicolinate + acetyl-CoA + H2O = L-2-acetamido-6-oxoheptanedioate + CoA. Its pathway is amino-acid biosynthesis; L-lysine biosynthesis via DAP pathway; LL-2,6-diaminopimelate from (S)-tetrahydrodipicolinate (acetylase route): step 1/3. Functionally, catalyzes the transfer of an acetyl group from acetyl-CoA to tetrahydrodipicolinate. This chain is 2,3,4,5-tetrahydropyridine-2,6-dicarboxylate N-acetyltransferase, found in Lactococcus lactis subsp. cremoris (strain MG1363).